The following is a 370-amino-acid chain: uncharacterized protein (370 aa).

This is an uncharacterized protein from Acanthamoeba polyphaga (Amoeba).